Reading from the N-terminus, the 961-residue chain is Thrombospondin-4 (961 aa).

The first 23 residues, 1–23 (MLAPRGATFLLLHLALQPWLGAG), serve as a signal peptide directing secretion. Positions 24-192 (AQATPQVFDL…LEELKLVVRG (169 aa)) constitute a Laminin G-like domain. In terms of domain architecture, EGF-like 1 spans 286–325 (PVRRCDSNPCFRGVRCTDTRDGFQCGPCPEGYTGNGIVCS). 21 disulfide bridges follow: Cys290–Cys301, Cys295–Cys310, Cys313–Cys324, Cys330–Cys341, Cys335–Cys350, Cys353–Cys377, Cys383–Cys394, Cys388–Cys403, Cys406–Cys418, Cys424–Cys438, Cys432–Cys448, Cys450–Cys461, Cys477–Cys482, Cys487–Cys507, Cys523–Cys543, Cys546–Cys566, Cys582–Cys602, Cys605–Cys625, Cys643–Cys663, Cys683–Cys703, and Cys719–Cys940. Residues 326–363 (DVDECRYHPCYPGVRCVNLAPGFRCDACPVGFTGPMMQ) form the EGF-like 2; calcium-binding domain. The region spanning 379 to 419 (DIDECRNGACVLNSICINTLGSYRCGPCKPGYIGDQMRGCK) is the EGF-like 3; calcium-binding domain. The 43-residue stretch at 420–462 (MERNCRDPELNPCSVNAQCIEERQGDVTCVCGVGWAGDGYICG) folds into the EGF-like 4 domain. TSP type-3 repeat units follow at residues 463–495 (KDVD…NSGQ), 496–531 (EDAD…NVDQ), 532–554 (RNSD…NNDQ), 555–590 (KDTD…NSDQ), 591–613 (EDRD…NPNQ), 614–651 (SDVD…NSAQ), 652–691 (LDTD…NPAQ), and 692–727 (EDSN…EVTL). A Cell attachment site motif is present at residues 562 to 564 (KGD). The segment at 581–671 (NCQKVPNSDQ…ECDDDDDNDG (91 aa)) is disordered. An N-linked (GlcNAc...) asparagine glycan is attached at Asn612. Residues 640-652 (TDNCPTVINSAQL) show a composition bias toward polar residues. The segment covering 660 to 671 (GDECDDDDDNDG) has biased composition (acidic residues). Residues 731–945 (RAYQTVVLDP…LKYRCNDTIP (215 aa)) enclose the TSP C-terminal domain. Residue Asn941 is glycosylated (N-linked (GlcNAc...) asparagine).

This sequence belongs to the thrombospondin family. As to quaternary structure, homopentamer; disulfide-linked. Interacts with PTBP3. Interacts (via EGF-like 3; calcium-binding domain) with ATF6 and facilitates its processing, activation and nuclear translocation. Interacts with NOTCH1.

The protein resides in the endoplasmic reticulum. The protein localises to the sarcoplasmic reticulum. Its subcellular location is the secreted. It is found in the extracellular space. It localises to the extracellular matrix. Adhesive glycoprotein that mediates cell-to-cell and cell-to-matrix interactions and is involved in various processes including cellular proliferation, migration, adhesion and attachment, inflammatory response to CNS injury, regulation of vascular inflammation and adaptive responses of the heart to pressure overload and in myocardial function and remodeling. Binds to structural extracellular matrix (ECM) proteins and modulates the ECM in response to tissue damage, contributing to cardioprotective and adaptive ECM remodeling. Plays a role in ER stress response, via its interaction with the activating transcription factor 6 alpha (ATF6) which produces adaptive ER stress response factors and protects myocardium from pressure overload. May contribute to spinal presynaptic hypersensitivity and neuropathic pain states after peripheral nerve injury. May play a role in regulating protective astrogenesis from the subventricular zone (SVZ) niche after injury in a NOTCH1-dependent manner. This Bos taurus (Bovine) protein is Thrombospondin-4 (THBS4).